Consider the following 398-residue polypeptide: Serpin-Z2B (398 aa).

Positions 343 to 367 (GTEAAATTIAKVVLRQAPPPSVLDF) are RCL.

The protein belongs to the serpin family.

Functionally, inhibits chymotrypsin, cathepsin G and trypsin in vitro. The chain is Serpin-Z2B from Triticum aestivum (Wheat).